Here is a 393-residue protein sequence, read N- to C-terminus: Protein TsgA homolog (393 aa).

The next 12 membrane-spanning stretches (helical) occupy residues 11–31, 51–71, 78–98, 101–121, 134–154, 162–182, 206–226, 245–265, 273–293, 297–317, 332–352, and 361–381; these read WISF…GMVM, FLNA…EIIP, FGFV…SLAL, AAMF…TFLI, LLFT…VAAY, WYWV…LTFG, IGVL…LGFI, TLVS…SFIL, ILTV…KAQP, AWFI…IITL, FVLT…GPIV, and LLTA…LGFV.

This sequence belongs to the major facilitator superfamily. TsgA family.

Its subcellular location is the cell inner membrane. This chain is Protein TsgA homolog, found in Citrobacter koseri (strain ATCC BAA-895 / CDC 4225-83 / SGSC4696).